Reading from the N-terminus, the 274-residue chain is ATP synthase subunit a (274 aa).

The next 5 helical transmembrane spans lie at 43–63 (TLNIDSLFFSVVLGILFLYVF), 103–123 (VIAPLALTVFVWVLLMNVMDL), 144–164 (VVPTADVSVTLSMAIGVFVLI), 223–243 (LIFILIAGLLPWWSQWLLSLP), and 245–265 (AIFHILIITLQAFIFMVLTIV).

Belongs to the ATPase A chain family. As to quaternary structure, F-type ATPases have 2 components, CF(1) - the catalytic core - and CF(0) - the membrane proton channel. CF(1) has five subunits: alpha(3), beta(3), gamma(1), delta(1), epsilon(1). CF(0) has three main subunits: a(1), b(2) and c(9-12). The alpha and beta chains form an alternating ring which encloses part of the gamma chain. CF(1) is attached to CF(0) by a central stalk formed by the gamma and epsilon chains, while a peripheral stalk is formed by the delta and b chains.

The protein resides in the cell inner membrane. In terms of biological role, key component of the proton channel; it plays a direct role in the translocation of protons across the membrane. This is ATP synthase subunit a from Photorhabdus laumondii subsp. laumondii (strain DSM 15139 / CIP 105565 / TT01) (Photorhabdus luminescens subsp. laumondii).